Consider the following 328-residue polypeptide: Sulfate adenylyltransferase subunit 2 (328 aa).

The tract at residues 305 to 328 (ERQGRVIDRDSTGSMERKKAEGYF) is disordered.

Belongs to the PAPS reductase family. CysD subfamily. In terms of assembly, heterodimer composed of CysD, the smaller subunit, and CysN.

It catalyses the reaction sulfate + ATP + H(+) = adenosine 5'-phosphosulfate + diphosphate. The protein operates within sulfur metabolism; hydrogen sulfide biosynthesis; sulfite from sulfate: step 1/3. Its function is as follows. With CysN forms the ATP sulfurylase (ATPS) that catalyzes the adenylation of sulfate producing adenosine 5'-phosphosulfate (APS) and diphosphate, the first enzymatic step in sulfur assimilation pathway. APS synthesis involves the formation of a high-energy phosphoric-sulfuric acid anhydride bond driven by GTP hydrolysis by CysN coupled to ATP hydrolysis by CysD. The sequence is that of Sulfate adenylyltransferase subunit 2 from Rhodopseudomonas palustris (strain BisB18).